The sequence spans 238 residues: uncharacterized protein (238 aa).

Transmembrane regions (helical) follow at residues 19-39 (IVIEAFPGTGLVGSIAGFQII), 79-99 (IILFSDIIISPFKINGLAEFI), and 141-161 (YVEIFDFGVVGGMGGNLLIKC).

The protein resides in the cell membrane. This is an uncharacterized protein from Methanocaldococcus jannaschii (strain ATCC 43067 / DSM 2661 / JAL-1 / JCM 10045 / NBRC 100440) (Methanococcus jannaschii).